A 376-amino-acid chain; its full sequence is CC-adding tRNA nucleotidyltransferase (376 aa).

CTP is bound at residue 26-29 (GAVR). 2 residues coordinate Mg(2+): D39 and D41. CTP contacts are provided by residues 94–95 (RD), N99, 136–145 (DPLRMLRAAR), and R176.

The protein belongs to the tRNA nucleotidyltransferase/poly(A) polymerase family. Requires Mg(2+) as cofactor.

It catalyses the reaction a tRNA precursor + 2 CTP = a tRNA with a 3' CC end + 2 diphosphate. TRNA nucleotidyltransferase involved in the synthesis of the tRNA CCA terminus. Adds the two cytidine residues to tRNA. The chain is CC-adding tRNA nucleotidyltransferase from Shouchella clausii (strain KSM-K16) (Alkalihalobacillus clausii).